We begin with the raw amino-acid sequence, 284 residues long: Probable sulfate transport system permease protein cysT (284 aa).

7 consecutive transmembrane segments (helical) span residues 25–45 (AWAL…GALL), 75–95 (SALI…WVLV), 107–127 (AAVD…LATV), 145–165 (VAFT…PFVV), 194–214 (FLRV…ALAF), 223–243 (SVVI…VLIF), and 255–275 (TVIG…INWI). Residues 69-272 (YAVTLSSALI…LISLTLLLAI (204 aa)) form the ABC transmembrane type-1 domain.

Belongs to the binding-protein-dependent transport system permease family. CysTW subfamily.

It is found in the plastid. Its subcellular location is the chloroplast membrane. In terms of biological role, part of the ABC transporter complex cysAWTP (TC 3.A.1.6.1) involved in sulfate/thiosulfate import. Probably responsible for the translocation of the substrate across the membrane. This is Probable sulfate transport system permease protein cysT (cysT) from Nephroselmis olivacea (Green alga).